Consider the following 187-residue polypeptide: BCL2/adenovirus E1B 19 kDa protein-interacting protein 3 (187 aa).

The disordered stretch occupies residues 42–86 (LDAQHESGRSSSKSSHCDSPPRSQTPQDTNRAEIDSHSFGEKNST). 6 positions are modified to phosphoserine: Ser-48, Ser-60, Ser-77, Ser-79, Ser-85, and Ser-88. Residues 50–63 (RSSSKSSHCDSPPR) are compositionally biased toward low complexity. A compositionally biased stretch (basic and acidic residues) spans 71 to 81 (NRAEIDSHSFG). A BH3 motif is present at residues 93–118 (IERRREVESILKKNSDWIWDWSSRPE). A helical membrane pass occupies residues 157–177 (VFLPSLLLSHLLAIGLGIYIG).

Belongs to the NIP3 family. In terms of assembly, homodimer. Binds to BCL2. Interacts with BNIP3L and ACAA2. Interacts (via BH3 domain) with SPATA18 (via coiled-coil domains). Interacts with BOK; promotes BOK oligomerization. Interacts with PPTC7; this interaction promotes BNIP3 degradation.

Its subcellular location is the mitochondrion. The protein resides in the mitochondrion outer membrane. Apoptosis-inducing protein that can overcome BCL2 suppression. May play a role in repartitioning calcium between the two major intracellular calcium stores in association with BCL2. Involved in mitochondrial quality control via its interaction with SPATA18/MIEAP: in response to mitochondrial damage, participates in mitochondrial protein catabolic process (also named MALM) leading to the degradation of damaged proteins inside mitochondria. The physical interaction of SPATA18/MIEAP, BNIP3 and BNIP3L/NIX at the mitochondrial outer membrane may play a critical role in the translocation of lysosomal proteins from the cytoplasm to the mitochondrial matrix. The physical interaction of SPATA18/MIEAP, BNIP3 and BNIP3L/NIX at the mitochondrial outer membrane regulates the opening of a pore in the mitochondrial double membrane in order to mediate the translocation of lysosomal proteins from the cytoplasm to the mitochondrial matrix. Plays an important role in the calprotectin (S100A8/A9)-induced cell death pathway. This is BCL2/adenovirus E1B 19 kDa protein-interacting protein 3 from Mus musculus (Mouse).